The following is a 250-amino-acid chain: Ubiquinone/menaquinone biosynthesis C-methyltransferase UbiE (250 aa).

S-adenosyl-L-methionine is bound by residues threonine 74, aspartate 94, aspartate 122–alanine 123, and serine 139.

Belongs to the class I-like SAM-binding methyltransferase superfamily. MenG/UbiE family.

It carries out the reaction a 2-demethylmenaquinol + S-adenosyl-L-methionine = a menaquinol + S-adenosyl-L-homocysteine + H(+). The catalysed reaction is a 2-methoxy-6-(all-trans-polyprenyl)benzene-1,4-diol + S-adenosyl-L-methionine = a 5-methoxy-2-methyl-3-(all-trans-polyprenyl)benzene-1,4-diol + S-adenosyl-L-homocysteine + H(+). It functions in the pathway quinol/quinone metabolism; menaquinone biosynthesis; menaquinol from 1,4-dihydroxy-2-naphthoate: step 2/2. It participates in cofactor biosynthesis; ubiquinone biosynthesis. Its function is as follows. Methyltransferase required for the conversion of demethylmenaquinol (DMKH2) to menaquinol (MKH2) and the conversion of 2-polyprenyl-6-methoxy-1,4-benzoquinol (DDMQH2) to 2-polyprenyl-3-methyl-6-methoxy-1,4-benzoquinol (DMQH2). This chain is Ubiquinone/menaquinone biosynthesis C-methyltransferase UbiE, found in Dinoroseobacter shibae (strain DSM 16493 / NCIMB 14021 / DFL 12).